Consider the following 387-residue polypeptide: Leucine aminopeptidase 1 (387 aa).

The signal sequence occupies residues 1–18 (MKFTNLSLLALSASLASA). A propeptide spanning residues 19-86 (RFVEQHETDQ…LGTLRTSSVK (68 aa)) is cleaved from the precursor. The N-linked (GlcNAc...) asparagine glycan is linked to N179. H187, D206, E245, and D272 together coordinate Zn(2+). C321 and C325 are disulfide-bonded. H354 is a Zn(2+) binding site.

The protein belongs to the peptidase M28 family. M28E subfamily. As to quaternary structure, monomer. Zn(2+) is required as a cofactor.

It is found in the secreted. Its function is as follows. Extracellular aminopeptidase that allows assimilation of proteinaceous substrates. The protein is Leucine aminopeptidase 1 (lap1) of Sclerotinia sclerotiorum (strain ATCC 18683 / 1980 / Ss-1) (White mold).